The following is a 247-amino-acid chain: Protein IRON-RELATED TRANSCRIPTION FACTOR 2 (247 aa).

The short motif at 68–75 is the Nuclear localization signal element; sequence HRKLSHNA. The tract at residues 68–81 is basic motif; it reads HRKLSHNAYERDRR. Residues 68 to 119 enclose the bHLH domain; that stretch reads HRKLSHNAYERDRRKQLNELYSSLRALLPDADHTKLSIPTTVSRVLKYIPEL. Positions 82-119 are helix-loop-helix motif; sequence KQLNELYSSLRALLPDADHTKLSIPTTVSRVLKYIPEL.

The protein belongs to the bHLH protein family. In terms of assembly, forms homodimers. Interacts with BHLH156 in the nucleus. In terms of tissue distribution, expressed constitutively at low levels in the roots. Also observed in flowers, developing seeds, embryos and vascular bundles.

It is found in the nucleus. The protein resides in the cytoplasm. Its function is as follows. Transcription activator that binds to the DNA motif 5'-CACGTGG-3' in the promoter of iron (Fe) deficiency-inducible genes as well as of genes involved in iron homeostasis, thus contributing to basal tolerance to iron deficiency, iron uptake from soil and iron transport, particularly during seed maturation and germination. Promotes the accumulation of mugineic acid family phytosiderophores (MAs). Required for ethylene-mediated signaling during iron deficiency responses. Improves growth and yield, especially in calcareous soil with low iron availability. Promotes iron concentration in shoots and grain. The protein is Protein IRON-RELATED TRANSCRIPTION FACTOR 2 of Oryza sativa subsp. japonica (Rice).